The chain runs to 277 residues: Nuclear egress protein 2 (277 aa).

Residues 1 to 250 (MEVIPNINSR…ASGECVTTIR (250 aa)) are Perinuclear space-facing. Residues 251 to 271 (IPRYIVMLWIFSVLLAMVTWG) traverse the membrane as a helical segment. Residues 272–277 (SYRLYS) lie on the Nuclear side of the membrane.

The protein belongs to the herpesviridae NEC2 protein family. In terms of assembly, forms a heterohexameric complex with NEC1. Phosphorylated.

It is found in the host nucleus inner membrane. Plays an essential role in virion nuclear egress, the first step of virion release from infected cell. Within the host nucleus, NEC1 interacts with the newly formed capsid through the vertexes and directs it to the inner nuclear membrane by associating with NEC2. Induces the budding of the capsid at the inner nuclear membrane as well as its envelopment into the perinuclear space. There, the NEC1/NEC2 complex promotes the fusion of the enveloped capsid with the outer nuclear membrane and the subsequent release of the viral capsid into the cytoplasm where it will reach the secondary budding sites in the host Golgi or trans-Golgi network. This chain is Nuclear egress protein 2, found in Gallid herpesvirus 2 (strain Chicken/Md5/ATCC VR-987) (GaHV-2).